Here is a 164-residue protein sequence, read N- to C-terminus: Dihydrofolate reductase (164 aa).

The region spanning 2–162 (NISIIVAMSQ…FYVTFKILKK (161 aa)) is the DHFR domain. 6-8 (IVA) provides a ligand contact to substrate. NADP(+) is bound by residues 7-8 (VA) and 15-20 (IGQKNS). D28 lines the substrate pocket. 44 to 47 (GRKT) provides a ligand contact to NADP(+). R58 contacts substrate. Residues 63–66 (LTRQ) and 96–101 (IGGSNL) contribute to the NADP(+) site. Substrate is bound at residue T115.

Belongs to the dihydrofolate reductase family.

It carries out the reaction (6S)-5,6,7,8-tetrahydrofolate + NADP(+) = 7,8-dihydrofolate + NADPH + H(+). The protein operates within cofactor biosynthesis; tetrahydrofolate biosynthesis; 5,6,7,8-tetrahydrofolate from 7,8-dihydrofolate: step 1/1. In terms of biological role, key enzyme in folate metabolism. Catalyzes an essential reaction for de novo glycine and purine synthesis, and for DNA precursor synthesis. The protein is Dihydrofolate reductase (folA) of Buchnera aphidicola subsp. Baizongia pistaciae (strain Bp).